Reading from the N-terminus, the 444-residue chain is sn-glycerol-3-phosphate-binding periplasmic protein UgpB (444 aa).

Positions 1-30 (MFNNTIRKTHAIRTAAACVAFALMSAGAQA) are cleaved as a signal peptide. 7 residues coordinate sn-glycerol 3-phosphate: Tyr72, Glu96, Ser151, Ser277, Gly314, Tyr353, and Arg404.

It belongs to the bacterial solute-binding protein 1 family. The complex is composed of two ATP-binding proteins (UgpC), two transmembrane proteins (UgpA and UgpE) and a solute-binding protein (UgpB).

The protein resides in the periplasm. Its function is as follows. Part of the ABC transporter complex UgpBAEC involved in sn-glycerol-3-phosphate (G3P) import. Binds G3P. This is sn-glycerol-3-phosphate-binding periplasmic protein UgpB (ugpB) from Pectobacterium atrosepticum (strain SCRI 1043 / ATCC BAA-672) (Erwinia carotovora subsp. atroseptica).